An 815-amino-acid chain; its full sequence is (-)-kolavenyl diphosphate synthase TPS14, chloroplastic (815 aa).

The transit peptide at 1 to 51 (MFMSSSSSSHARRPQLSSFSYLHPPLPFPGLSFFNTRDKRVNFDSTRIICI) directs the protein to the chloroplast. Lysine 247 contacts substrate. 2 residues coordinate Mg(2+): aspartate 379 and aspartate 381. The DXDD motif motif lies at 379-382 (DIDD). Residue lysine 465 coordinates substrate.

This sequence belongs to the terpene synthase family. Tpsc subfamily. The cofactor is Mg(2+).

It is found in the plastid. Its subcellular location is the chloroplast. The catalysed reaction is (2E,6E,10E)-geranylgeranyl diphosphate = (-)-kolavenyl diphosphate. Its activity is regulated as follows. Inhibited by high concentrations of magnesium. Functionally, diterpene synthase that catalyzes the formation of (-)-kolavenyl diphosphate from geranylgeranyl diphosphate (GGPP). The sequence is that of (-)-kolavenyl diphosphate synthase TPS14, chloroplastic from Tripterygium wilfordii (Thunder God vine).